The following is a 423-amino-acid chain: MATVNGAVGKPQHISKMIESTKMNGNQAQDAAGRADTPVSSDTPDYLHVFDSRTCNIHHIPVSDGFVRGSDLSTIAAPVKGNSGRMQKLAVLDPGFQHTACKESGITFIDGEKGELRYRGVRIEDLFHDHDFDSTLHLLLWGRLPTNDEKIAFERRIFEAATPPQEVCDVIRKLPKNTDFISMFLTGLSTYMGADEEMTRSRHQAVMTYHKNMKATDDAIIRCFAYVSATLATVYCHVKGVELHPPKEGLTLVENFLHMIGMEDPDKKVSRTIDRLSINMADHELSCSTAAFLHVASSLTDPMTCLLTAISAASGPLHGGALEVCYQGLELIGSVENVPAYIAAVKAKKFRLFGYGHRVYKTQDPRAALTKELMEEHREAIAANPLLQIAVEIDRQANTDPYFVERKLKLNADFYGCFVYIAL.

Catalysis depends on residues His357 and Asp413.

This sequence belongs to the citrate synthase family.

Its pathway is secondary metabolite biosynthesis. Its function is as follows. Citrate synthase-like protein; part of the gene cluster that mediates the biosynthesis of squalestatin S1 (SQS1, also known as zaragozic acid A), a heavily oxidized fungal polyketide that offers potent cholesterol lowering activity by targeting squalene synthase (SS). SQS1 is composed of a 2,8-dioxobicyclic[3.2.1]octane-3,4,5-tricarboxyclic acid core that is connected to two lipophilic polyketide arms. These initial steps feature the priming of an unusual benzoic acid starter unit onto the highly reducing polyketide synthase clz14, followed by oxaloacetate extension and product release to generate a tricarboxylic acid containing product. The phenylalanine ammonia lyase (PAL) clz10 and the acyl-CoA ligase clz12 are involved in transforming phenylalanine into benzoyl-CoA. The citrate synthase-like protein clz17 is involved in connecting the C-alpha-carbons of the hexaketide chain and oxaloacetate to afford the tricarboxylic acid unit. The potential hydrolytic enzymes, clz11 and clz13, are in close proximity to pks2 and may participate in product release. On the other side, the tetraketide arm is synthesized by a the squalestatin tetraketide synthase clz2 and enzymatically esterified to the core in the last biosynthetic step, by the acetyltransferase clz6. The biosynthesis of the tetraketide must involve 3 rounds of chain extension. After the first and second rounds methyl-transfer occurs, and in all rounds of extension the ketoreductase and dehydratase are active. The enoyl reductase and C-MeT of clz2 are not active in the final round of extension. The acetyltransferase clz6 appears to have a broad substrate selectivity for its acyl CoA substrate, allowing the in vitro synthesis of novel squalestatins. The biosynthesis of SQS1 requires several oxidative steps likely performed by oxidoreductases clz3, clz15 and clz16. Finally, in support of the identification of the cluster as being responsible for SQS1 production, the cluster contains a gene encoding a putative squalene synthase (SS) clz20, suggesting a likely mechanism for self-resistance. The sequence is that of Citrate synthase-like protein clz17 from Cochliobolus lunatus (Filamentous fungus).